A 220-amino-acid chain; its full sequence is Guanylate kinase (220 aa).

A Guanylate kinase-like domain is found at 15-194 (GLMLVISSPS…AFDAVQSIVK (180 aa)). 22-29 (SPSGAGKS) provides a ligand contact to ATP.

This sequence belongs to the guanylate kinase family.

Its subcellular location is the cytoplasm. The catalysed reaction is GMP + ATP = GDP + ADP. In terms of biological role, essential for recycling GMP and indirectly, cGMP. This Rhizobium etli (strain ATCC 51251 / DSM 11541 / JCM 21823 / NBRC 15573 / CFN 42) protein is Guanylate kinase.